The following is an 84-amino-acid chain: Cell division topological specificity factor (84 aa).

The protein belongs to the MinE family.

Its function is as follows. Prevents the cell division inhibition by proteins MinC and MinD at internal division sites while permitting inhibition at polar sites. This ensures cell division at the proper site by restricting the formation of a division septum at the midpoint of the long axis of the cell. In Paraburkholderia phytofirmans (strain DSM 17436 / LMG 22146 / PsJN) (Burkholderia phytofirmans), this protein is Cell division topological specificity factor.